Here is a 281-residue protein sequence, read N- to C-terminus: NADPH-dependent 7-cyano-7-deazaguanine reductase (281 aa).

87 to 89 (VES) serves as a coordination point for substrate. 89–90 (SK) serves as a coordination point for NADPH. Cysteine 188 (thioimide intermediate) is an active-site residue. Aspartate 195 serves as the catalytic Proton donor. A substrate-binding site is contributed by 227 to 228 (HE). 256 to 257 (RG) is an NADPH binding site.

Belongs to the GTP cyclohydrolase I family. QueF type 2 subfamily. As to quaternary structure, homodimer.

The protein localises to the cytoplasm. The enzyme catalyses 7-aminomethyl-7-carbaguanine + 2 NADP(+) = 7-cyano-7-deazaguanine + 2 NADPH + 3 H(+). It functions in the pathway tRNA modification; tRNA-queuosine biosynthesis. In terms of biological role, catalyzes the NADPH-dependent reduction of 7-cyano-7-deazaguanine (preQ0) to 7-aminomethyl-7-deazaguanine (preQ1). The sequence is that of NADPH-dependent 7-cyano-7-deazaguanine reductase from Aliivibrio salmonicida (strain LFI1238) (Vibrio salmonicida (strain LFI1238)).